The following is a 104-amino-acid chain: ATP-dependent Clp protease adapter protein ClpS (104 aa).

It belongs to the ClpS family. Binds to the N-terminal domain of the chaperone ClpA.

Involved in the modulation of the specificity of the ClpAP-mediated ATP-dependent protein degradation. The chain is ATP-dependent Clp protease adapter protein ClpS from Bordetella avium (strain 197N).